The primary structure comprises 311 residues: Methionyl-tRNA formyltransferase (311 aa).

Residue 110-113 (SLLP) participates in (6S)-5,6,7,8-tetrahydrofolate binding.

The protein belongs to the Fmt family.

The catalysed reaction is L-methionyl-tRNA(fMet) + (6R)-10-formyltetrahydrofolate = N-formyl-L-methionyl-tRNA(fMet) + (6S)-5,6,7,8-tetrahydrofolate + H(+). In terms of biological role, attaches a formyl group to the free amino group of methionyl-tRNA(fMet). The formyl group appears to play a dual role in the initiator identity of N-formylmethionyl-tRNA by promoting its recognition by IF2 and preventing the misappropriation of this tRNA by the elongation apparatus. The protein is Methionyl-tRNA formyltransferase of Streptococcus pyogenes serotype M18 (strain MGAS8232).